The following is a 172-amino-acid chain: Adenine phosphoribosyltransferase (172 aa).

It belongs to the purine/pyrimidine phosphoribosyltransferase family. As to quaternary structure, homodimer.

It is found in the cytoplasm. The catalysed reaction is AMP + diphosphate = 5-phospho-alpha-D-ribose 1-diphosphate + adenine. The protein operates within purine metabolism; AMP biosynthesis via salvage pathway; AMP from adenine: step 1/1. Functionally, catalyzes a salvage reaction resulting in the formation of AMP, that is energically less costly than de novo synthesis. In Clostridium botulinum (strain Loch Maree / Type A3), this protein is Adenine phosphoribosyltransferase.